Here is a 214-residue protein sequence, read N- to C-terminus: Cytochrome c biogenesis ATP-binding export protein CcmA (214 aa).

Residues 16–212 (LRVSGLSLSR…PDAKRIDLGA (197 aa)) enclose the ABC transporter domain. Position 48–55 (48–55 (GPNGTGKT)) interacts with ATP.

Belongs to the ABC transporter superfamily. CcmA exporter (TC 3.A.1.107) family. As to quaternary structure, the complex is composed of two ATP-binding proteins (CcmA) and two transmembrane proteins (CcmB).

It localises to the cell inner membrane. The catalysed reaction is heme b(in) + ATP + H2O = heme b(out) + ADP + phosphate + H(+). In terms of biological role, part of the ABC transporter complex CcmAB involved in the biogenesis of c-type cytochromes; once thought to export heme, this seems not to be the case, but its exact role is uncertain. Responsible for energy coupling to the transport system. This Maricaulis maris (strain MCS10) (Caulobacter maris) protein is Cytochrome c biogenesis ATP-binding export protein CcmA.